A 124-amino-acid polypeptide reads, in one-letter code: Large ribosomal subunit protein mL52 (124 aa).

Residues 1-23 (MAALGMLLSTGVRRLHCGSAARA) constitute a mitochondrion transit peptide. The disordered stretch occupies residues 99–124 (LQEEKRKQQNALKPKGVLLQNPGPSQ).

The protein belongs to the mitochondrion-specific ribosomal protein mL52 family. As to quaternary structure, component of the mitochondrial ribosome large subunit (39S) which comprises a 16S rRNA and about 50 distinct proteins.

It localises to the mitochondrion. The polypeptide is Large ribosomal subunit protein mL52 (MRPL52) (Bos taurus (Bovine)).